Here is a 130-residue protein sequence, read N- to C-terminus: Fumarate reductase subunit D (130 aa).

3 helical membrane-spanning segments follow: residues 35–55 (FAMI…LGVI), 67–87 (SFAT…LPMW), and 110–130 (IACY…IFMI).

This sequence belongs to the FrdD family. In terms of assembly, part of an enzyme complex containing four subunits: a flavoprotein (FrdA), an iron-sulfur protein (FrdB), and two hydrophobic anchor proteins (FrdC and FrdD).

Its subcellular location is the cell inner membrane. Anchors the catalytic components of the fumarate reductase complex to the cell membrane, binds quinones. The chain is Fumarate reductase subunit D from Vibrio cholerae serotype O1 (strain M66-2).